Consider the following 422-residue polypeptide: MVMILRRSLINQGADSGAHRTFIPELHTPKMSQGPTLLSCGIMENDRWRDLDRKCPLQIDQPSASIWECLPEKCQDGSLWHQEAVTACAVTSLIKDLNINDHNGNPSAPPSKRQCRSLSFSDEMSSCRTSWRPLGSKVWTPVEKRRCYSGGSVQRYSNGVSPMQRSSSFSLPARANGLSSPCHQSSLHHRFGGQPCQGAPGSAPCGQAGDSWSPDPHPVGGGRLDLQRSLSCSHEQFSFPEYCPPSANSTPASTPELARRSSGLARSRSQPCVLNDKKIGVKRRRPDEVQEQRPSLDLAKMAQNCQTFSSLSCLNMGVDDHSSQSPFALVSSTRSWTALLSASSPGGRTPAGTPVPEPVPHSFDDQFTCQEDLSCDESDGCSLDEDCCRKGDPATSWRDRGACTNSLCSLDGELDIEQIENN.

Residues Ser-119, Ser-168, Ser-170, Ser-180, Ser-213, and Ser-269 each carry the phosphoserine modification. 2 disordered regions span residues Gly-193–Asp-225 and Cys-243–Ser-269. Residues Pro-244 to Ser-269 are compositionally biased toward low complexity. A Nuclear localization signal motif is present at residues Lys-282–Arg-285. Ser-335 and Ser-344 each carry phosphoserine.

This sequence belongs to the FAM53 family. As to quaternary structure, interacts with CTNNB1.

It is found in the nucleus. Its function is as follows. Acts as a regulator of Wnt signaling pathway by regulating beta-catenin (CTNNB1) nuclear localization. This chain is Protein FAM53B, found in Mus musculus (Mouse).